Consider the following 254-residue polypeptide: Ribosomal RNA small subunit methyltransferase G (254 aa).

Residues G84, F89, 136–137, and R155 contribute to the S-adenosyl-L-methionine site; that span reads VE.

It belongs to the methyltransferase superfamily. RNA methyltransferase RsmG family.

The protein resides in the cytoplasm. In terms of biological role, specifically methylates the N7 position of a guanine in 16S rRNA. In Synechococcus sp. (strain CC9311), this protein is Ribosomal RNA small subunit methyltransferase G.